A 149-amino-acid polypeptide reads, in one-letter code: MVFNVVEIQKILPHRYPFLLVDRITHLEKGSYIEGYKNVSISEPVFQGHFPDHPIYPGVMIIEGMAQAGGVLAFESMDNATQEEIANKVVYFMSIDKAKFRSPVTPGDQLVYKLNVIKNKGAIWQLDAKAYVDDKLVAEAELKAMIVDK.

The active site involves His-49.

It belongs to the thioester dehydratase family. FabZ subfamily.

It is found in the cytoplasm. The catalysed reaction is a (3R)-hydroxyacyl-[ACP] = a (2E)-enoyl-[ACP] + H2O. Functionally, involved in unsaturated fatty acids biosynthesis. Catalyzes the dehydration of short chain beta-hydroxyacyl-ACPs and long chain saturated and unsaturated beta-hydroxyacyl-ACPs. The chain is 3-hydroxyacyl-[acyl-carrier-protein] dehydratase FabZ from Sulfurovum sp. (strain NBC37-1).